A 968-amino-acid polypeptide reads, in one-letter code: MPFSLGQRWISDTESELGLGTVVALEGRMVTLMFPATDENRLFSRTDAPLTRVIFNPGDKAESHEGWSLTVSEVEEKDNLIIYHGIHSETGEQASLRETLLNHNIRFNKPQDRLFAGQIDRLERFGVRYQCQLLRHKLATSDLLGLQGPRVGLIPHQQWIAHEVGRRFAPRVLLADEVGLGKTIEAGLIIHQQLLTGRAERILVIVPDTLRHQWLVEMLRRFNLKFSVFDEDRCIEAYADNDNPFYTEQLVICSLELLRKKKRLEQALDADWDLMVVDEAHHLEWTEDAPSRAYRVVEALSEVVPGVLLLTATPDQLGHQSHFARLRLLDPDRFYDYEAFLKEESSYKDVASAADALASGNKLPDDAINSLTELLSEKDITPSINVIQATDIDPDQQQDARDELLQELLDRHGTGRVLYRNSRASVKGFPTRIFNAYPQAMPSQYVTAARVGAMMNGHLDTQGKVKQALSPEKIYQDFDSNSASWWKFDPRVDWLINFLKENRRKKVLIIASQAETALSLEEALRTREGIQTTVFHEGMSIIERDKAGAYFAQETGGAQALICSEIGSEGRNFQFASQLILFDLPLNPDLLEQRIGRLDRIGQNNDVEIHVPYLEKTAQECLMQWYHKGLNAFEQTCPSGHILFSEFAEPLLDVLINQNDDSLTELLNHTQTRYKELKTVMEQGRDKLLEINSHGGERANKLVQSLAARDEDTQLIGSVIRLWDVIGVEQEDCGENAIVLNPSEHMMFPTYPGLPEDGITVTFDREMALSRDDIALITQEHPIVQTGLDLITSSETGTTSVAVLKNKALPAGTIFLELIYMADASAPKSSQLYRYLPPTPVRILLDKNGNNLSDNVTYESFNKQLSAVNRHIASKLVNASQTILHPLFAKGEEFAEVELKLLADSARAKMTSQLTLELERLEALKAVNPNIRDEELEHIREQMNELNGYLDGCLLQLDAIRLVLVSHA.

The 170-residue stretch at 163 to 332 folds into the Helicase ATP-binding domain; sequence EVGRRFAPRV…FARLRLLDPD (170 aa). 176–183 provides a ligand contact to ATP; it reads DEVGLGKT. The DEAH box motif lies at 278-281; sequence DEAH. The region spanning 491–641 is the Helicase C-terminal domain; that stretch reads RVDWLINFLK…AFEQTCPSGH (151 aa).

The protein belongs to the SNF2/RAD54 helicase family. RapA subfamily. Interacts with the RNAP. Has a higher affinity for the core RNAP than for the holoenzyme. Its ATPase activity is stimulated by binding to RNAP.

In terms of biological role, transcription regulator that activates transcription by stimulating RNA polymerase (RNAP) recycling in case of stress conditions such as supercoiled DNA or high salt concentrations. Probably acts by releasing the RNAP, when it is trapped or immobilized on tightly supercoiled DNA. Does not activate transcription on linear DNA. Probably not involved in DNA repair. In Shewanella sediminis (strain HAW-EB3), this protein is RNA polymerase-associated protein RapA.